A 211-amino-acid chain; its full sequence is Claudin-1 (211 aa).

The Cytoplasmic portion of the chain corresponds to 1-7; the sequence is MANAGLQ. The helical transmembrane segment at 8–28 threads the bilayer; it reads LLGFILASLGWIGSIVSTALP. The Extracellular portion of the chain corresponds to 29–81; sequence QWKIYSYAGDNIVTAQAIYEGLWMSCVSQSTGQIQCKVFDSLLNLNSTLQATR. A disulfide bridge connects residues Cys54 and Cys64. A helical transmembrane segment spans residues 82–102; sequence ALMVIGILLGLIAIFVSTIGM. Over 103–115 the chain is Cytoplasmic; it reads KCMRCLEDDEVQK. The helical transmembrane segment at 116–136 threads the bilayer; sequence MWMAVIGGIIFLISGLATLVA. Topologically, residues 137-163 are extracellular; sequence TAWYGNRIVQEFYDPLTPINARYEFGQ. A helical transmembrane segment spans residues 164–184; that stretch reads ALFTGWAAASLCLLGGVLLSC. Over 185–211 the chain is Cytoplasmic; that stretch reads SCPRKTTSYPTPRPYPKPTPSSGKDYV. The segment at 190–211 is disordered; it reads TTSYPTPRPYPKPTPSSGKDYV. The tract at residues 210-211 is interactions with TJP1, TJP2, TJP3 and PATJ; sequence YV.

It belongs to the claudin family. In terms of assembly, can form homo- and heteropolymers with other CLDN. Homopolymers interact with CLDN3, but not CLDN2, homopolymers. Directly interacts with TJP1/ZO-1, TJP2/ZO-2 and TJP3/ZO-3. Interacts with MPDZ and PATJ. Interacts with OCLN, CD81, CLDN4, CLDN6 and CLDN9. As to expression, detected in epidermis and liver (at protein level). Widely expressed, with highest levels in liver and kidney.

The protein resides in the cell junction. Its subcellular location is the tight junction. It is found in the cell membrane. The protein localises to the basolateral cell membrane. Its function is as follows. Claudins function as major constituents of the tight junction complexes that regulate the permeability of epithelia. While some claudin family members play essential roles in the formation of impermeable barriers, others mediate the permeability to ions and small molecules. Often, several claudin family members are coexpressed and interact with each other, and this determines the overall permeability. CLDN1 is required to prevent the paracellular diffusion of small molecules through tight junctions in the epidermis and is required for the normal barrier function of the skin. Required for normal water homeostasis and to prevent excessive water loss through the skin, probably via an indirect effect on the expression levels of other proteins, since CLDN1 itself seems to be dispensable for water barrier formation in keratinocyte tight junctions. The sequence is that of Claudin-1 (Cldn1) from Mus musculus (Mouse).